Consider the following 1605-residue polypeptide: Nuclear pore complex protein Nup153 (1605 aa).

Gly residues predominate over residues 1–16 (MAAAGGGGPGGPGTGG). 2 disordered regions span residues 1–44 (MAAA…GIIS) and 185–208 (STSQ…SDKD). Polar residues-rich tracts occupy residues 27–44 (SGRT…GIIS) and 194–203 (ISTTSGFSSR). Repeat unit 1 spans residues 249-250 (FG). Positions 249–1556 (FGSLSPSLGN…NSSGGVFTFN (1308 aa)) are 33 X 2 AA repeats of F-G. Disordered regions lie at residues 332–373 (SPLA…PFPP), 397–476 (LTPS…GPVL), and 497–522 (SGSA…SSSP). Residues 397-409 (LTPSAVSNTNSRR) are compositionally biased toward polar residues. The segment covering 410–420 (IQPDKHNESRK) has biased composition (basic and acidic residues). 2 stretches are compositionally biased toward polar residues: residues 421–432 (NNLQTTSQSHSF) and 497–517 (SGSA…TCRL). The segment at 655–684 (AFGLWQCSACFHENMSSDSNCISCSALKPR) adopts a RanBP2-type 1 zinc-finger fold. Residues 656 to 657 (FG) form repeat 2. Positions 661, 664, 675, and 678 each coordinate Zn(2+). The segment at 686-711 (TETSKKLPASPPSSNTKSTVPLSSTP) is disordered. Residues 697-711 (PSSNTKSTVPLSSTP) are compositionally biased toward polar residues. RanBP2-type zinc fingers lie at residues 720-749 (PAGM…PKPG), 790-819 (PMGS…EKPG), 842-871 (PTGS…AKPG), and 906-935 (SAGS…SKPG). 12 residues coordinate Zn(2+): cysteine 726, cysteine 729, cysteine 740, cysteine 743, cysteine 796, cysteine 799, cysteine 810, cysteine 813, cysteine 848, cysteine 851, cysteine 862, and cysteine 865. Tandem repeats lie at residues 943–944 (FG), 959–960 (FG), 988–989 (FG), 1007–1008 (FG), 1021–1022 (FG), 1044–1045 (FG), 1100–1101 (FG), 1116–1117 (FG), 1134–1135 (FG), 1148–1149 (FG), 1167–1168 (FG), 1188–1189 (FG), 1227–1228 (FG), 1243–1244 (FG), 1259–1260 (FG), 1275–1276 (FG), 1291–1292 (FG), 1307–1308 (FG), 1339–1340 (FG), 1356–1357 (FG), 1371–1372 (FG), 1382–1383 (FG), 1414–1415 (FG), 1430–1431 (FG), 1448–1449 (FG), 1470–1471 (FG), 1482–1483 (FG), 1502–1503 (FG), 1512–1513 (FG), 1521–1522 (FG), and 1535–1536 (FG). The segment covering 1499-1518 (VPAFGSSSAQPPVFGQQATQ) has biased composition (polar residues). Positions 1499–1529 (VPAFGSSSAQPPVFGQQATQPSFGSPAAPSA) are disordered. A compositionally biased stretch (low complexity) spans 1519–1529 (PSFGSPAAPSA). A disordered region spans residues 1556–1605 (NANSGSTTQPPPPGYMFNAAAPGFNMGTNGRTTPASTISTRKIKTARRRK). Residues 1581–1595 (MGTNGRTTPASTIST) are compositionally biased toward polar residues. Residues 1596-1605 (RKIKTARRRK) show a composition bias toward basic residues.

This sequence belongs to the NUP153 family. In terms of assembly, interacts (via C-terminal domain) with the nuclear receptor kpnb1; the interaction occurs in a RanGTP-dependent manner. Associates with the Importin alpha/Importin beta receptor. It depends on Zn(2+) as a cofactor. As to expression, egg (at protein level).

It localises to the nucleus membrane. The protein localises to the nucleus. Its subcellular location is the nuclear pore complex. Component of the nuclear pore complex (NPC), a complex required for the trafficking across the nuclear envelope. Functions as a scaffolding element in the nuclear phase of the NPC essential for normal nucleocytoplasmic transport of proteins and mRNAs. May be involved in the retention of unspliced mRNAs in the nucleus. Probably mediates tpr anchoring to the nuclear membrane at NPC. Possible DNA-binding subunit of the nuclear pore complex (NPC). This chain is Nuclear pore complex protein Nup153 (nup153), found in Xenopus laevis (African clawed frog).